A 498-amino-acid chain; its full sequence is Histidine--tRNA ligase (498 aa).

The protein belongs to the class-II aminoacyl-tRNA synthetase family. As to quaternary structure, homodimer.

It localises to the cytoplasm. It carries out the reaction tRNA(His) + L-histidine + ATP = L-histidyl-tRNA(His) + AMP + diphosphate + H(+). This Bartonella quintana (strain Toulouse) (Rochalimaea quintana) protein is Histidine--tRNA ligase.